The primary structure comprises 64 residues: Beta-defensin 1 (64 aa).

The first 20 residues, 1–20 (MRLHRLLLVFLLMVLLPVPG), serve as a signal peptide directing secretion. Positions 21-23 (LLK) are excised as a propeptide. 3 disulfide bridges follow: Cys31–Cys60, Cys38–Cys53, and Cys43–Cys61.

This sequence belongs to the beta-defensin family. Monomer. Homodimer.

The protein localises to the secreted. Its subcellular location is the membrane. Functionally, has bactericidal activity. May act as a ligand for C-C chemokine receptor CCR6. Positively regulates the sperm motility and bactericidal activity in a CCR6-dependent manner. Binds to CCR6 and triggers Ca2+ mobilization in the sperm which is important for its motility. The sequence is that of Beta-defensin 1 (DEFB1) from Sus scrofa (Pig).